Here is a 254-residue protein sequence, read N- to C-terminus: 3-deoxy-manno-octulosonate cytidylyltransferase (254 aa).

This sequence belongs to the KdsB family.

It localises to the cytoplasm. It catalyses the reaction 3-deoxy-alpha-D-manno-oct-2-ulosonate + CTP = CMP-3-deoxy-beta-D-manno-octulosonate + diphosphate. It functions in the pathway nucleotide-sugar biosynthesis; CMP-3-deoxy-D-manno-octulosonate biosynthesis; CMP-3-deoxy-D-manno-octulosonate from 3-deoxy-D-manno-octulosonate and CTP: step 1/1. The protein operates within bacterial outer membrane biogenesis; lipopolysaccharide biosynthesis. Activates KDO (a required 8-carbon sugar) for incorporation into bacterial lipopolysaccharide in Gram-negative bacteria. The protein is 3-deoxy-manno-octulosonate cytidylyltransferase of Bordetella petrii (strain ATCC BAA-461 / DSM 12804 / CCUG 43448).